Consider the following 476-residue polypeptide: Transposase for transposon Tn5 (476 aa).

The interaction with DNA stretch occupies residues 1 to 70 (MITSALHRAA…YRFIRNPNVS (70 aa)). The Mg(2+) site is built by D97 and D188. 2 interaction with DNA regions span residues 237-255 (YQISIPQKGVVDKRGKRKN) and 319-348 (YTHRWRIEEFHKAWKTGAGAERQRMEEPDN). E326 serves as a coordination point for Mg(2+). The interval 369–476 (SFTLPQALRA…KDLMAQGIKI (108 aa)) is important for dimerization.

This sequence belongs to the transposase 11 family. As to quaternary structure, monomer. Homodimer of tnp (isoform 1), and heterodimer of tnp (isoform 1) and inh (isoform 2). Mg(2+) serves as cofactor.

Mediates transposition of transposon Tn5 by a 'cut and paste' mechanism. First, the monomeric transposase binds the 19 bp inverted DNA repeats flanking the transposon. Then, dimerization of the DNA-bound transposase creates a synaptic DNA complex. After nicking of the first DNA strand, excision of the transposon proceeds through a series of intermediates. The transposase then mediates the insertion of the transposon at a new site by strand transfer. The activity of the wild-type transposase is very low, and is further inhibited by dimerization with the transposase inhibitor (inh). The polypeptide is Transposase for transposon Tn5 (tnpA) (Escherichia coli).